A 267-amino-acid polypeptide reads, in one-letter code: Diphthine--ammonia ligase (267 aa).

Phosphotyrosine is present on Y97.

This sequence belongs to the Diphthine--ammonia ligase family.

The enzyme catalyses diphthine-[translation elongation factor 2] + NH4(+) + ATP = diphthamide-[translation elongation factor 2] + AMP + diphosphate + H(+). Its pathway is protein modification; peptidyl-diphthamide biosynthesis. Amidase that catalyzes the last step of diphthamide biosynthesis using ammonium and ATP. Diphthamide biosynthesis consists in the conversion of an L-histidine residue in the translation elongation factor 2 (EEF2) to diphthamide. The chain is Diphthine--ammonia ligase (Dph6) from Mus musculus (Mouse).